Here is a 40-residue protein sequence, read N- to C-terminus: Large ribosomal subunit protein bL36 (40 aa).

It belongs to the bacterial ribosomal protein bL36 family.

The chain is Large ribosomal subunit protein bL36 from Corynebacterium glutamicum (strain R).